Consider the following 367-residue polypeptide: Phosphoribosylaminoimidazole-succinocarboxamide synthase (367 aa).

The protein belongs to the SAICAR synthetase family.

The catalysed reaction is 5-amino-1-(5-phospho-D-ribosyl)imidazole-4-carboxylate + L-aspartate + ATP = (2S)-2-[5-amino-1-(5-phospho-beta-D-ribosyl)imidazole-4-carboxamido]succinate + ADP + phosphate + 2 H(+). It participates in purine metabolism; IMP biosynthesis via de novo pathway; 5-amino-1-(5-phospho-D-ribosyl)imidazole-4-carboxamide from 5-amino-1-(5-phospho-D-ribosyl)imidazole-4-carboxylate: step 1/2. This Shewanella sp. (strain MR-4) protein is Phosphoribosylaminoimidazole-succinocarboxamide synthase.